A 428-amino-acid polypeptide reads, in one-letter code: Immunoglobulin superfamily member 11 (428 aa).

The first 22 residues, 1-22, serve as a signal peptide directing secretion; that stretch reads MTRRRSALASWLLLSLLGVAAS. In terms of domain architecture, Ig-like V-type spans 23–136; that stretch reads LEVSESPGSV…DRGGRNIGVT (114 aa). Over 23 to 239 the chain is Extracellular; it reads LEVSESPGSV…LQVISPQPRS (217 aa). 2 disulfides stabilise this stretch: C44-C120 and C165-C215. N102 is a glycosylation site (N-linked (GlcNAc...) asparagine). The 91-residue stretch at 144 to 234 folds into the Ig-like C2-type domain; that stretch reads PSAPNCQIQG…TCLLDLQVIS (91 aa). A helical transmembrane segment spans residues 240 to 260; the sequence is VGVIAGAVGTGAVLIVICLAL. Over 261 to 428 the chain is Cytoplasmic; sequence TSGAFFYWRS…PAQSRAGSLV (168 aa). R375 carries the post-translational modification Omega-N-methylarginine.

In terms of processing, N-glycosylated.

It is found in the cell membrane. Its function is as follows. Functions as a cell adhesion molecule through homophilic interaction. Stimulates cell growth. This Rattus norvegicus (Rat) protein is Immunoglobulin superfamily member 11 (Igsf11).